The primary structure comprises 492 residues: Protein nucleotidyltransferase YdiU (492 aa).

ATP contacts are provided by Gly-88, Gly-90, Arg-91, Lys-111, Asp-123, Gly-124, Arg-174, and Arg-181. Asp-250 (proton acceptor) is an active-site residue. Mg(2+) contacts are provided by Asn-251 and Asp-260. Asp-260 serves as a coordination point for ATP.

This sequence belongs to the SELO family. Mg(2+) is required as a cofactor. It depends on Mn(2+) as a cofactor.

It catalyses the reaction L-seryl-[protein] + ATP = 3-O-(5'-adenylyl)-L-seryl-[protein] + diphosphate. The enzyme catalyses L-threonyl-[protein] + ATP = 3-O-(5'-adenylyl)-L-threonyl-[protein] + diphosphate. The catalysed reaction is L-tyrosyl-[protein] + ATP = O-(5'-adenylyl)-L-tyrosyl-[protein] + diphosphate. It carries out the reaction L-histidyl-[protein] + UTP = N(tele)-(5'-uridylyl)-L-histidyl-[protein] + diphosphate. It catalyses the reaction L-seryl-[protein] + UTP = O-(5'-uridylyl)-L-seryl-[protein] + diphosphate. The enzyme catalyses L-tyrosyl-[protein] + UTP = O-(5'-uridylyl)-L-tyrosyl-[protein] + diphosphate. Its function is as follows. Nucleotidyltransferase involved in the post-translational modification of proteins. It can catalyze the addition of adenosine monophosphate (AMP) or uridine monophosphate (UMP) to a protein, resulting in modifications known as AMPylation and UMPylation. In Rhodopseudomonas palustris (strain BisB5), this protein is Protein nucleotidyltransferase YdiU.